The sequence spans 193 residues: Interferon epsilon (193 aa).

The signal sequence occupies residues 1-21 (MINKSFFEIMLVLLASSTGFS). A disulfide bond links Cys-53 and Cys-163. Residue Asn-139 is glycosylated (N-linked (GlcNAc...) asparagine).

It belongs to the alpha/beta interferon family.

The protein resides in the secreted. Its function is as follows. Type I interferon required for maintaining basal levels of IFN-regulated genes, including 2'-5'-oligoadenylate synthetase, IRF7 and ISG15, in the female reproductive tract. Directly mediates protection against viral and bacterial genital infections. This is Interferon epsilon (IFNE) from Sus scrofa (Pig).